A 111-amino-acid chain; its full sequence is SPbeta prophage-derived uncharacterized protein YolC (111 aa).

The first 25 residues, 1-25, serve as a signal peptide directing secretion; it reads MKKRLIGFLVLVPALIMSGITLIEA.

The sequence is that of SPbeta prophage-derived uncharacterized protein YolC (yolC) from Bacillus subtilis (strain 168).